We begin with the raw amino-acid sequence, 345 residues long: N-acetyl-gamma-glutamyl-phosphate reductase (345 aa).

Cys-149 is an active-site residue.

It belongs to the NAGSA dehydrogenase family. Type 1 subfamily.

The protein resides in the cytoplasm. The enzyme catalyses N-acetyl-L-glutamate 5-semialdehyde + phosphate + NADP(+) = N-acetyl-L-glutamyl 5-phosphate + NADPH + H(+). It participates in amino-acid biosynthesis; L-arginine biosynthesis; N(2)-acetyl-L-ornithine from L-glutamate: step 3/4. In terms of biological role, catalyzes the NADPH-dependent reduction of N-acetyl-5-glutamyl phosphate to yield N-acetyl-L-glutamate 5-semialdehyde. This is N-acetyl-gamma-glutamyl-phosphate reductase from Herminiimonas arsenicoxydans.